We begin with the raw amino-acid sequence, 149 residues long: Oocyte-expressed protein (149 aa).

Residues 49–110 form the KH; atypical domain; that stretch reads PLVFYLEAWL…RVQNRVKSVL (62 aa).

The protein belongs to the KHDC1 family. In terms of assembly, component of the subcortical maternal complex (SCMC), at least composed of NLRP5, KHDC3, OOEP, and TLE6. Within the complex, interacts with NLRP5, KHDC3 and TLE6. As part of the SCMC interacts with the SCMC-associated protein NLRP4F. The SCMC may facilitate translocation of its components between the nuclear and cytoplasmic compartments. Forms a scaffold complex with KHDC3/FILIA, and interacts with BLM and TRIM25 at DNA replication forks.

It is found in the cytoplasm. The protein resides in the nucleus. In terms of biological role, component of the subcortical maternal complex (SCMC), a multiprotein complex that plays a key role in early embryonic development. The SCMC complex is a structural constituent of cytoplasmic lattices, which consist in fibrous structures found in the cytoplasm of oocytes and preimplantation embryos. They are required to store maternal proteins critical for embryonic development, such as proteins that control epigenetic reprogramming of the preimplantation embryo, and prevent their degradation or activation. As part of the OOEP-KHDC3 scaffold, recruits BLM and TRIM25 to DNA replication forks, thereby promoting the ubiquitination of BLM by TRIM25, enhancing BLM retainment at replication forks and therefore promoting stalled replication fork restart. Positively regulates the homologous recombination-mediated DNA double-strand break (DSB) repair pathway by regulating ATM activation and RAD51 recruitment to DSBs in oocytes. Thereby contributes to oocyte survival and the resumption and completion of meiosis. This is Oocyte-expressed protein (OOEP) from Canis lupus familiaris (Dog).